Reading from the N-terminus, the 541-residue chain is 5' exonuclease Apollo (541 aa).

A Glycyl lysine isopeptide (Lys-Gly) (interchain with G-Cter in SUMO2) cross-link involves residue K334. 2 disordered regions span residues T350–K375 and I450–L489. Residues P358–S371 show a composition bias toward basic and acidic residues. Residues E492–F507 carry the TBM motif.

The protein belongs to the DNA repair metallo-beta-lactamase (DRMBL) family. As to quaternary structure, interacts with TERF2; the interaction is direct. Interacts with MUS81, MRE11 and FANCD2. Interacts with HSPA2, HSPA8 and HSPA14. Interacts with SPAG5. Ubiquitinated, leading to its degradation. Interaction with TERF2 protects it from ubiquitination.

Its subcellular location is the chromosome. It is found in the telomere. The protein resides in the nucleus. The protein localises to the cytoplasm. It localises to the cytoskeleton. Its subcellular location is the microtubule organizing center. It is found in the centrosome. It catalyses the reaction a beta-lactam + H2O = a substituted beta-amino acid. 5'-3' exonuclease that plays a central role in telomere maintenance and protection during S-phase. Participates in the protection of telomeres against non-homologous end-joining (NHEJ)-mediated repair, thereby ensuring that telomeres do not fuse. Plays a key role in telomeric loop (T loop) formation by being recruited by TERF2 at the leading end telomeres and by processing leading-end telomeres immediately after their replication via its exonuclease activity: generates 3' single-stranded overhang at the leading end telomeres avoiding blunt leading-end telomeres that are vulnerable to end-joining reactions and expose the telomere end in a manner that activates the DNA repair pathways. Together with TERF2, required to protect telomeres from replicative damage during replication by controlling the amount of DNA topoisomerase (TOP1, TOP2A and TOP2B) needed for telomere replication during fork passage and prevent aberrant telomere topology. Also involved in response to DNA damage: plays a role in response to DNA interstrand cross-links (ICLs) by facilitating double-strand break formation. In case of spindle stress, involved in prophase checkpoint. Possesses beta-lactamase activity, catalyzing the hydrolysis of penicillin G and nitrocefin. Exhibits no activity towards other beta-lactam antibiotic classes including cephalosporins (cefotaxime) and carbapenems (imipenem). The polypeptide is 5' exonuclease Apollo (Dclre1b) (Rattus norvegicus (Rat)).